An 86-amino-acid polypeptide reads, in one-letter code: BolA-like protein 2 (86 aa).

M1 bears the N-acetylmethionine mark.

Belongs to the BolA/IbaG family. Interacts with GLRX3; forms a heterotrimeric complex composed by two BOLA2 molecules and one GLRX3 molecule; linked by [2Fe-2S] clusters.

The protein localises to the cytoplasm. The protein resides in the nucleus. Functionally, acts as a cytosolic iron-sulfur (Fe-S) cluster assembly factor that facilitates [2Fe-2S] cluster insertion into a subset of cytosolic proteins. Acts together with the monothiol glutaredoxin GLRX3. The chain is BolA-like protein 2 (BOLA2) from Homo sapiens (Human).